The following is a 216-amino-acid chain: Glutathione S-transferase 1, isoform B (216 aa).

The 80-residue stretch at 1–80 folds into the GST N-terminal domain; the sequence is MDFYYLPGSA…YLVEKYGKPC (80 aa). Residues S9, 50–52, and 64–66 contribute to the glutathione site; these read HCV and ESR. The GST C-terminal domain maps to 89–210; sequence DPQKRAIVNQ…RSWAEAARPF (122 aa).

Belongs to the GST superfamily. Theta family. Homodimer.

It carries out the reaction RX + glutathione = an S-substituted glutathione + a halide anion + H(+). In terms of biological role, conjugation of reduced glutathione to a wide number of exogenous and endogenous hydrophobic electrophiles. This is Glutathione S-transferase 1, isoform B from Anopheles gambiae (African malaria mosquito).